Consider the following 336-residue polypeptide: Glycerol-3-phosphate dehydrogenase [NAD(P)+] (336 aa).

5 residues coordinate NADPH: Ser-14, Trp-15, Arg-35, Arg-36, and Lys-109. Sn-glycerol 3-phosphate is bound by residues Lys-109 and Gly-139. Residue Ala-143 participates in NADPH binding. Sn-glycerol 3-phosphate-binding residues include Lys-194, Asp-247, Ser-257, Arg-258, and Asn-259. Residue Lys-194 is the Proton acceptor of the active site. An NADPH-binding site is contributed by Arg-258. Glu-284 is a binding site for NADPH.

The protein belongs to the NAD-dependent glycerol-3-phosphate dehydrogenase family.

It localises to the cytoplasm. It catalyses the reaction sn-glycerol 3-phosphate + NAD(+) = dihydroxyacetone phosphate + NADH + H(+). It carries out the reaction sn-glycerol 3-phosphate + NADP(+) = dihydroxyacetone phosphate + NADPH + H(+). Its pathway is membrane lipid metabolism; glycerophospholipid metabolism. Functionally, catalyzes the reduction of the glycolytic intermediate dihydroxyacetone phosphate (DHAP) to sn-glycerol 3-phosphate (G3P), the key precursor for phospholipid synthesis. This Streptomyces avermitilis (strain ATCC 31267 / DSM 46492 / JCM 5070 / NBRC 14893 / NCIMB 12804 / NRRL 8165 / MA-4680) protein is Glycerol-3-phosphate dehydrogenase [NAD(P)+].